Consider the following 80-residue polypeptide: Sulfur carrier protein TusA (80 aa).

Catalysis depends on Cys17, which acts as the Cysteine persulfide intermediate.

This sequence belongs to the sulfur carrier protein TusA family.

The protein resides in the cytoplasm. Sulfur carrier protein which probably makes part of a sulfur-relay system. The polypeptide is Sulfur carrier protein TusA (Pseudomonas entomophila (strain L48)).